The following is a 125-amino-acid chain: uncharacterized protein (125 aa).

The chain crosses the membrane as a helical span at residues 7–29; it reads NCMFLYVYTDVCVRLCASIFYIM.

It localises to the membrane. This is an uncharacterized protein from Saccharomyces cerevisiae (strain ATCC 204508 / S288c) (Baker's yeast).